A 233-amino-acid chain; its full sequence is tRNA (guanine-N(7)-)-methyltransferase (233 aa).

The S-adenosyl-L-methionine site is built by Glu-64, Glu-89, Asp-116, and Asp-138. Asp-138 is an active-site residue. Substrate-binding positions include Lys-142, Asp-174, and 212–215 (TRYE).

Belongs to the class I-like SAM-binding methyltransferase superfamily. TrmB family.

It carries out the reaction guanosine(46) in tRNA + S-adenosyl-L-methionine = N(7)-methylguanosine(46) in tRNA + S-adenosyl-L-homocysteine. Its pathway is tRNA modification; N(7)-methylguanine-tRNA biosynthesis. Functionally, catalyzes the formation of N(7)-methylguanine at position 46 (m7G46) in tRNA. This Rhizobium johnstonii (strain DSM 114642 / LMG 32736 / 3841) (Rhizobium leguminosarum bv. viciae) protein is tRNA (guanine-N(7)-)-methyltransferase.